A 188-amino-acid polypeptide reads, in one-letter code: Elongation factor P (188 aa).

Belongs to the elongation factor P family.

The protein resides in the cytoplasm. It functions in the pathway protein biosynthesis; polypeptide chain elongation. Its function is as follows. Involved in peptide bond synthesis. Stimulates efficient translation and peptide-bond synthesis on native or reconstituted 70S ribosomes in vitro. Probably functions indirectly by altering the affinity of the ribosome for aminoacyl-tRNA, thus increasing their reactivity as acceptors for peptidyl transferase. The chain is Elongation factor P from Rhodopseudomonas palustris (strain TIE-1).